The following is a 30-amino-acid chain: Cycloviolacin-O10 (30 aa).

Positions 1 to 30 (GIPCGESCVYIPCLTSAVGCSCKSKVCYRN) form a cross-link, cyclopeptide (Gly-Asn). 3 disulfides stabilise this stretch: cysteine 4–cysteine 20, cysteine 8–cysteine 22, and cysteine 13–cysteine 27.

Post-translationally, this is a cyclic peptide. As to expression, expressed in petals and roots but not in leaves, petioles and runners (at protein level).

Functionally, probably participates in a plant defense mechanism. The sequence is that of Cycloviolacin-O10 from Viola odorata (Sweet violet).